Here is a 330-residue protein sequence, read N- to C-terminus: Pantothenate synthetase 2 (330 aa).

Residue His-55 is the Proton donor of the active site. ATP-binding positions include 167–170 (GEKD), Val-196, and 204–207 (ASSR).

The protein belongs to the pantothenate synthetase family. Homodimer.

The protein localises to the cytoplasm. It catalyses the reaction (R)-pantoate + beta-alanine + ATP = (R)-pantothenate + AMP + diphosphate + H(+). It participates in cofactor biosynthesis; (R)-pantothenate biosynthesis; (R)-pantothenate from (R)-pantoate and beta-alanine: step 1/1. Functionally, catalyzes the condensation of pantoate with beta-alanine in an ATP-dependent reaction via a pantoyl-adenylate intermediate. The sequence is that of Pantothenate synthetase 2 from Frankia alni (strain DSM 45986 / CECT 9034 / ACN14a).